A 304-amino-acid polypeptide reads, in one-letter code: Acetyl-coenzyme A carboxylase carboxyl transferase subunit beta (304 aa).

Residues 25–294 form the CoA carboxyltransferase N-terminal domain; it reads VWTKCDSCGQ…PSVVESKADT (270 aa). Zn(2+) is bound by residues cysteine 29, cysteine 32, cysteine 48, and cysteine 51. Residues 29–51 form a C4-type zinc finger; sequence CDSCGQVLYRAELERNLEVCPKC.

This sequence belongs to the AccD/PCCB family. Acetyl-CoA carboxylase is a heterohexamer composed of biotin carboxyl carrier protein (AccB), biotin carboxylase (AccC) and two subunits each of ACCase subunit alpha (AccA) and ACCase subunit beta (AccD). It depends on Zn(2+) as a cofactor.

It localises to the cytoplasm. The enzyme catalyses N(6)-carboxybiotinyl-L-lysyl-[protein] + acetyl-CoA = N(6)-biotinyl-L-lysyl-[protein] + malonyl-CoA. It functions in the pathway lipid metabolism; malonyl-CoA biosynthesis; malonyl-CoA from acetyl-CoA: step 1/1. Functionally, component of the acetyl coenzyme A carboxylase (ACC) complex. Biotin carboxylase (BC) catalyzes the carboxylation of biotin on its carrier protein (BCCP) and then the CO(2) group is transferred by the transcarboxylase to acetyl-CoA to form malonyl-CoA. The polypeptide is Acetyl-coenzyme A carboxylase carboxyl transferase subunit beta (Yersinia pestis (strain Pestoides F)).